Reading from the N-terminus, the 509-residue chain is ATP synthase subunit alpha (509 aa).

169–176 (GDRQTGKT) contributes to the ATP binding site.

The protein belongs to the ATPase alpha/beta chains family. As to quaternary structure, F-type ATPases have 2 components, CF(1) - the catalytic core - and CF(0) - the membrane proton channel. CF(1) has five subunits: alpha(3), beta(3), gamma(1), delta(1), epsilon(1). CF(0) has three main subunits: a(1), b(2) and c(9-12). The alpha and beta chains form an alternating ring which encloses part of the gamma chain. CF(1) is attached to CF(0) by a central stalk formed by the gamma and epsilon chains, while a peripheral stalk is formed by the delta and b chains.

Its subcellular location is the cell inner membrane. It carries out the reaction ATP + H2O + 4 H(+)(in) = ADP + phosphate + 5 H(+)(out). Produces ATP from ADP in the presence of a proton gradient across the membrane. The alpha chain is a regulatory subunit. This Methylorubrum extorquens (strain CM4 / NCIMB 13688) (Methylobacterium extorquens) protein is ATP synthase subunit alpha.